The following is a 95-amino-acid chain: uncharacterized protein (95 aa).

The chain crosses the membrane as a helical span at residues 27–47; sequence SFGLAIIGILLIACEIILFLT.

It is found in the membrane. This is an uncharacterized protein from Homo sapiens (Human).